We begin with the raw amino-acid sequence, 103 residues long: Protein FMC1 homolog (103 aa).

Belongs to the FMC1 family.

This chain is Protein FMC1 homolog, found in Nematostella vectensis (Starlet sea anemone).